Here is a 1399-residue protein sequence, read N- to C-terminus: DNA-directed RNA polymerase subunit beta' (1399 aa).

Zn(2+) contacts are provided by cysteine 71, cysteine 73, cysteine 86, and cysteine 89. The Mg(2+) site is built by aspartate 462, aspartate 464, and aspartate 466. Residues cysteine 810, cysteine 884, cysteine 891, and cysteine 894 each contribute to the Zn(2+) site.

This sequence belongs to the RNA polymerase beta' chain family. The RNAP catalytic core consists of 2 alpha, 1 beta, 1 beta' and 1 omega subunit. When a sigma factor is associated with the core the holoenzyme is formed, which can initiate transcription. The cofactor is Mg(2+). It depends on Zn(2+) as a cofactor.

The catalysed reaction is RNA(n) + a ribonucleoside 5'-triphosphate = RNA(n+1) + diphosphate. Functionally, DNA-dependent RNA polymerase catalyzes the transcription of DNA into RNA using the four ribonucleoside triphosphates as substrates. This Chelativorans sp. (strain BNC1) protein is DNA-directed RNA polymerase subunit beta'.